The sequence spans 234 residues: Lipoprotein-releasing system ATP-binding protein LolD 1 (234 aa).

The ABC transporter domain maps to 5–231 (IEARGIEKVF…RLTSNVRDPG (227 aa)). 41–48 (GASGSGKS) serves as a coordination point for ATP.

The protein belongs to the ABC transporter superfamily. Lipoprotein translocase (TC 3.A.1.125) family. As to quaternary structure, the complex is composed of two ATP-binding proteins (LolD) and two transmembrane proteins (LolC and LolE).

It is found in the cell inner membrane. Its function is as follows. Part of the ABC transporter complex LolCDE involved in the translocation of mature outer membrane-directed lipoproteins, from the inner membrane to the periplasmic chaperone, LolA. Responsible for the formation of the LolA-lipoprotein complex in an ATP-dependent manner. The chain is Lipoprotein-releasing system ATP-binding protein LolD 1 from Caulobacter vibrioides (strain ATCC 19089 / CIP 103742 / CB 15) (Caulobacter crescentus).